A 693-amino-acid polypeptide reads, in one-letter code: TBC1 domain family member 14 (693 aa).

Position 91 is a phosphoserine (Ser91). Disordered stretches follow at residues 108 to 130 (PSCA…SSTF) and 271 to 304 (NAQK…RKNL). The span at 271–288 (NAQKDSKRIQKEYEDKAG) shows a compositional bias: basic and acidic residues. Ser295 carries the post-translational modification Phosphoserine. One can recognise a Rab-GAP TBC domain in the interval 401-611 (GIPPSVRGKV…RIWDVFCRDG (211 aa)).

In terms of assembly, interacts with ULK1. May interact with RAB11A and RAB11B, but does not exhibit any GTPase-activating activity toward these proteins. Interacts with TRAPPC8.

It is found in the golgi apparatus. Its subcellular location is the cis-Golgi network. It localises to the trans-Golgi network. Its function is as follows. Plays a role in the regulation of starvation-induced autophagosome formation. Together with the TRAPPIII complex, regulates a constitutive trafficking step from peripheral recycling endosomes to the early Golgi, maintaining the cycling pool of ATG9 required for initiation of autophagy. The polypeptide is TBC1 domain family member 14 (TBC1D14) (Homo sapiens (Human)).